The sequence spans 171 residues: Large ribosomal subunit protein bL9 (171 aa).

It belongs to the bacterial ribosomal protein bL9 family.

Binds to the 23S rRNA. The protein is Large ribosomal subunit protein bL9 of Rickettsia prowazekii (strain Madrid E).